The primary structure comprises 700 residues: Acetyl-coenzyme A carboxylase carboxyl transferase subunit beta, chloroplastic (700 aa).

Residues cysteine 34, cysteine 37, cysteine 53, and cysteine 56 each contribute to the Zn(2+) site. A C4-type zinc finger spans residues 34-56; sequence CENCETLIYKKSLLEQKGVCAEC. One can recognise a CoA carboxyltransferase N-terminal domain in the interval 445–700; that stretch reads KKGRDTKDTE…ETIEIYMYGD (256 aa).

Belongs to the AccD/PCCB family. In terms of assembly, acetyl-CoA carboxylase is a heterohexamer composed of biotin carboxyl carrier protein, biotin carboxylase and 2 subunits each of ACCase subunit alpha and ACCase plastid-coded subunit beta (accD). Zn(2+) serves as cofactor.

The protein resides in the plastid. It is found in the chloroplast stroma. The catalysed reaction is N(6)-carboxybiotinyl-L-lysyl-[protein] + acetyl-CoA = N(6)-biotinyl-L-lysyl-[protein] + malonyl-CoA. It functions in the pathway lipid metabolism; malonyl-CoA biosynthesis; malonyl-CoA from acetyl-CoA: step 1/1. In terms of biological role, component of the acetyl coenzyme A carboxylase (ACC) complex. Biotin carboxylase (BC) catalyzes the carboxylation of biotin on its carrier protein (BCCP) and then the CO(2) group is transferred by the transcarboxylase to acetyl-CoA to form malonyl-CoA. The polypeptide is Acetyl-coenzyme A carboxylase carboxyl transferase subunit beta, chloroplastic (Cryptomeria japonica (Japanese cedar)).